The sequence spans 160 residues: Phosphopantetheine adenylyltransferase (160 aa).

Residue Thr9 coordinates substrate. ATP-binding positions include 9-10 (TF) and His17. Substrate is bound by residues Lys41, Leu73, and Arg87. Residues 88 to 90 (GLR), Glu98, and 123 to 129 (YSFLSSS) contribute to the ATP site.

Belongs to the bacterial CoaD family. Homohexamer. Requires Mg(2+) as cofactor.

It localises to the cytoplasm. It carries out the reaction (R)-4'-phosphopantetheine + ATP + H(+) = 3'-dephospho-CoA + diphosphate. The protein operates within cofactor biosynthesis; coenzyme A biosynthesis; CoA from (R)-pantothenate: step 4/5. In terms of biological role, reversibly transfers an adenylyl group from ATP to 4'-phosphopantetheine, yielding dephospho-CoA (dPCoA) and pyrophosphate. The chain is Phosphopantetheine adenylyltransferase from Moorella thermoacetica (strain ATCC 39073 / JCM 9320).